The sequence spans 228 residues: uncharacterized protein (228 aa).

Residues 99 to 207 (LANKVPFVVC…PKIKVGKPFI (109 aa)) enclose the tRNA-binding domain.

This is an uncharacterized protein from Mycoplasma genitalium (strain ATCC 33530 / DSM 19775 / NCTC 10195 / G37) (Mycoplasmoides genitalium).